Reading from the N-terminus, the 598-residue chain is Aspartate--tRNA(Asp/Asn) ligase (598 aa).

Glu-177 provides a ligand contact to L-aspartate. The aspartate stretch occupies residues 201–204 (QLFK). Arg-223 contributes to the L-aspartate binding site. ATP is bound by residues 223–225 (RDE) and Gln-232. Residue His-456 participates in L-aspartate binding. Glu-493 lines the ATP pocket. Arg-500 is an L-aspartate binding site. ATP is bound at residue 545 to 548 (GLDR).

This sequence belongs to the class-II aminoacyl-tRNA synthetase family. Type 1 subfamily. In terms of assembly, homodimer.

It is found in the cytoplasm. It catalyses the reaction tRNA(Asx) + L-aspartate + ATP = L-aspartyl-tRNA(Asx) + AMP + diphosphate. In terms of biological role, aspartyl-tRNA synthetase with relaxed tRNA specificity since it is able to aspartylate not only its cognate tRNA(Asp) but also tRNA(Asn). Reaction proceeds in two steps: L-aspartate is first activated by ATP to form Asp-AMP and then transferred to the acceptor end of tRNA(Asp/Asn). This chain is Aspartate--tRNA(Asp/Asn) ligase, found in Prochlorococcus marinus (strain MIT 9301).